A 237-amino-acid polypeptide reads, in one-letter code: 1-(5-phosphoribosyl)-5-[(5-phosphoribosylamino)methylideneamino] imidazole-4-carboxamide isomerase (237 aa).

Aspartate 8 (proton acceptor) is an active-site residue. Catalysis depends on aspartate 130, which acts as the Proton donor.

The protein belongs to the HisA/HisF family.

It localises to the cytoplasm. The catalysed reaction is 1-(5-phospho-beta-D-ribosyl)-5-[(5-phospho-beta-D-ribosylamino)methylideneamino]imidazole-4-carboxamide = 5-[(5-phospho-1-deoxy-D-ribulos-1-ylimino)methylamino]-1-(5-phospho-beta-D-ribosyl)imidazole-4-carboxamide. It functions in the pathway amino-acid biosynthesis; L-histidine biosynthesis; L-histidine from 5-phospho-alpha-D-ribose 1-diphosphate: step 4/9. The chain is 1-(5-phosphoribosyl)-5-[(5-phosphoribosylamino)methylideneamino] imidazole-4-carboxamide isomerase from Caldicellulosiruptor saccharolyticus (strain ATCC 43494 / DSM 8903 / Tp8T 6331).